The following is a 296-amino-acid chain: tRNA dimethylallyltransferase (296 aa).

ATP is bound at residue 11 to 18 (GPTAVGKT). 13–18 (TAVGKT) lines the substrate pocket. Residues 36–39 (DSQQ) are interaction with substrate tRNA.

Belongs to the IPP transferase family. As to quaternary structure, monomer. Requires Mg(2+) as cofactor.

The enzyme catalyses adenosine(37) in tRNA + dimethylallyl diphosphate = N(6)-dimethylallyladenosine(37) in tRNA + diphosphate. In terms of biological role, catalyzes the transfer of a dimethylallyl group onto the adenine at position 37 in tRNAs that read codons beginning with uridine, leading to the formation of N6-(dimethylallyl)adenosine (i(6)A). The protein is tRNA dimethylallyltransferase of Streptococcus equi subsp. equi (strain 4047).